A 265-amino-acid polypeptide reads, in one-letter code: Undecaprenyl-diphosphatase (265 aa).

Helical transmembrane passes span 38–58 (RSDF…CLAL), 75–95 (RDYV…GLIV), 108–128 (PVAW…HVAG), 135–155 (VVTW…GVFP), 181–201 (FVFM…LLEM), 215–235 (VAVA…WLLS), and 244–264 (VFAV…PAAA).

This sequence belongs to the UppP family.

Its subcellular location is the cell inner membrane. It carries out the reaction di-trans,octa-cis-undecaprenyl diphosphate + H2O = di-trans,octa-cis-undecaprenyl phosphate + phosphate + H(+). In terms of biological role, catalyzes the dephosphorylation of undecaprenyl diphosphate (UPP). Confers resistance to bacitracin. The polypeptide is Undecaprenyl-diphosphatase (Xanthomonas oryzae pv. oryzae (strain MAFF 311018)).